A 163-amino-acid polypeptide reads, in one-letter code: Nucleotide-binding protein CKO_02735 (163 aa).

This sequence belongs to the YajQ family.

Nucleotide-binding protein. The protein is Nucleotide-binding protein CKO_02735 of Citrobacter koseri (strain ATCC BAA-895 / CDC 4225-83 / SGSC4696).